The sequence spans 617 residues: Dihydroxy-acid dehydratase (617 aa).

Residue Asp-81 coordinates Mg(2+). Cys-122 is a binding site for [2Fe-2S] cluster. Mg(2+) contacts are provided by Asp-123 and Lys-124. N6-carboxylysine is present on Lys-124. Cys-195 contacts [2Fe-2S] cluster. Glu-491 is a Mg(2+) binding site. Residue Ser-517 is the Proton acceptor of the active site.

Belongs to the IlvD/Edd family. In terms of assembly, homodimer. [2Fe-2S] cluster is required as a cofactor. It depends on Mg(2+) as a cofactor.

The enzyme catalyses (2R)-2,3-dihydroxy-3-methylbutanoate = 3-methyl-2-oxobutanoate + H2O. It catalyses the reaction (2R,3R)-2,3-dihydroxy-3-methylpentanoate = (S)-3-methyl-2-oxopentanoate + H2O. Its pathway is amino-acid biosynthesis; L-isoleucine biosynthesis; L-isoleucine from 2-oxobutanoate: step 3/4. The protein operates within amino-acid biosynthesis; L-valine biosynthesis; L-valine from pyruvate: step 3/4. In terms of biological role, functions in the biosynthesis of branched-chain amino acids. Catalyzes the dehydration of (2R,3R)-2,3-dihydroxy-3-methylpentanoate (2,3-dihydroxy-3-methylvalerate) into 2-oxo-3-methylpentanoate (2-oxo-3-methylvalerate) and of (2R)-2,3-dihydroxy-3-methylbutanoate (2,3-dihydroxyisovalerate) into 2-oxo-3-methylbutanoate (2-oxoisovalerate), the penultimate precursor to L-isoleucine and L-valine, respectively. The polypeptide is Dihydroxy-acid dehydratase (Buchnera aphidicola subsp. Acyrthosiphon pisum (strain 5A)).